The sequence spans 207 residues: MADS-box protein AGL71 (207 aa).

In terms of domain architecture, MADS-box spans 1 to 61 (MVRGKIEIKK…GRLHEYSSSQ (61 aa)). One can recognise a K-box domain in the interval 88-178 (LQELKMEIDR…LEEVNMHHSS (91 aa)).

It is found in the nucleus. Its function is as follows. MADS-box transcription factor that acts with AGL42 and AGL72 in the control of flowering time. Promotes flowering at the shoot apical and axillary meristems. Seems to act through a gibberellin-dependent pathway. Interacts genetically with SOC1 and its expression is directly regulated by SOC1. The protein is MADS-box protein AGL71 (AGL71) of Arabidopsis thaliana (Mouse-ear cress).